The sequence spans 20 residues: Cytochrome c oxidase subunit 6A1, mitochondrial (20 aa).

Belongs to the cytochrome c oxidase subunit 6A family. As to quaternary structure, component of the cytochrome c oxidase (complex IV, CIV), a multisubunit enzyme composed of 14 subunits. The complex is composed of a catalytic core of 3 subunits MT-CO1, MT-CO2 and MT-CO3, encoded in the mitochondrial DNA, and 11 supernumerary subunits COX4I, COX5A, COX5B, COX6A, COX6B, COX6C, COX7A, COX7B, COX7C, COX8 and NDUFA4, which are encoded in the nuclear genome. The complex exists as a monomer or a dimer and forms supercomplexes (SCs) in the inner mitochondrial membrane with NADH-ubiquinone oxidoreductase (complex I, CI) and ubiquinol-cytochrome c oxidoreductase (cytochrome b-c1 complex, complex III, CIII), resulting in different assemblies (supercomplex SCI(1)III(2)IV(1) and megacomplex MCI(2)III(2)IV(2)). Liver specific isoform.

It localises to the mitochondrion inner membrane. Its pathway is energy metabolism; oxidative phosphorylation. Component of the cytochrome c oxidase, the last enzyme in the mitochondrial electron transport chain which drives oxidative phosphorylation. The respiratory chain contains 3 multisubunit complexes succinate dehydrogenase (complex II, CII), ubiquinol-cytochrome c oxidoreductase (cytochrome b-c1 complex, complex III, CIII) and cytochrome c oxidase (complex IV, CIV), that cooperate to transfer electrons derived from NADH and succinate to molecular oxygen, creating an electrochemical gradient over the inner membrane that drives transmembrane transport and the ATP synthase. Cytochrome c oxidase is the component of the respiratory chain that catalyzes the reduction of oxygen to water. Electrons originating from reduced cytochrome c in the intermembrane space (IMS) are transferred via the dinuclear copper A center (CU(A)) of subunit 2 and heme A of subunit 1 to the active site in subunit 1, a binuclear center (BNC) formed by heme A3 and copper B (CU(B)). The BNC reduces molecular oxygen to 2 water molecules unsing 4 electrons from cytochrome c in the IMS and 4 protons from the mitochondrial matrix. This Ovis aries (Sheep) protein is Cytochrome c oxidase subunit 6A1, mitochondrial (COX6A1).